The following is a 111-amino-acid chain: Protein YibV (111 aa).

The chain is Protein YibV (yibV) from Escherichia coli O157:H7.